Reading from the N-terminus, the 700-residue chain is Elongation factor G (700 aa).

The tr-type G domain maps to 10 to 286; the sequence is NKVRNIGIMA…AVIDYLPNPL (277 aa). GTP contacts are provided by residues 19–26, 83–87, and 137–140; these read AHIDAGKT, DTPGH, and NKMD.

Belongs to the TRAFAC class translation factor GTPase superfamily. Classic translation factor GTPase family. EF-G/EF-2 subfamily.

It is found in the cytoplasm. Its function is as follows. Catalyzes the GTP-dependent ribosomal translocation step during translation elongation. During this step, the ribosome changes from the pre-translocational (PRE) to the post-translocational (POST) state as the newly formed A-site-bound peptidyl-tRNA and P-site-bound deacylated tRNA move to the P and E sites, respectively. Catalyzes the coordinated movement of the two tRNA molecules, the mRNA and conformational changes in the ribosome. The sequence is that of Elongation factor G from Rhodococcus opacus (strain B4).